Here is a 720-residue protein sequence, read N- to C-terminus: Probable ATP-dependent RNA helicase DHX35 (720 aa).

The 166-residue stretch at 64–229 folds into the Helicase ATP-binding domain; it reads LYLIENYQTV…FNQNETSDPA (166 aa). 77–84 provides a ligand contact to ATP; the sequence is GETGCGKS. Positions 176–179 match the DEAH box motif; the sequence is DEAH. The region spanning 261-438 is the Helicase C-terminal domain; it reads TVETVVKIHQ…PVILQLKALG (178 aa).

It belongs to the DEAD box helicase family. DEAH subfamily. Identified in the spliceosome C complex.

The catalysed reaction is ATP + H2O = ADP + phosphate + H(+). Functionally, may be involved in pre-mRNA splicing. The sequence is that of Probable ATP-dependent RNA helicase DHX35 (DHX35) from Pongo abelii (Sumatran orangutan).